Consider the following 303-residue polypeptide: Phytochrome-associated serine/threonine-protein phosphatase 1 (303 aa).

Positions 50, 52, 78, and 110 each coordinate Zn(2+). The active-site Proton donor is the H111. Zn(2+) is bound by residues H160 and H234.

This sequence belongs to the PPP phosphatase family. PP-6 (PP-V) subfamily. In terms of assembly, interacts with PHYA and PHYB, mostly when they are phosphorylated and in Pfr forms. Interacts with TAP46. Interacts with PIN1 and PIN2. Interacts with ABI5. Interacts with PIF3 and PIF4. Protein phosphatase 6 (PP6) holoenzyme is a heterotrimeric complex formed by the catalytic subunit FYPP, a SAPS domain-containing subunit (SAL) and a protein phosphatase 2A regulatory subunit A (PP2AA). Requires Zn(2+) as cofactor. As to expression, mostly expressed in flowers. Also detected to a lower extent in stems and leaves. Expressed in roots.

It is found in the cytoplasm. The catalysed reaction is O-phospho-L-seryl-[protein] + H2O = L-seryl-[protein] + phosphate. It catalyses the reaction O-phospho-L-threonyl-[protein] + H2O = L-threonyl-[protein] + phosphate. Functionally, catalytic subunit of protein phosphatase 6 (PP6). Dephosphorylates phosphorylated phytochromes, with a preference toward Pfr forms. Plays a major role in the photoperiodic control of flowering time in long days by modulating phytochrome signals in flowering time control. Involved in the regulation of polar auxin transport in roots. Dephosphorylates directly the auxin efflux carriers PIN1 and PIN2, thus promoting their proper polar localization in root cell plasma membrane. Acts antagonistically with the protein kinase PID to regulate the reversible phosphorylation of PIN and polar targeting, subsequently impacting polar auxin transport and plant development. Involved in the regulation of abscisic acid (ABA) signaling during seed germination and postgermination seedling growth. Functions as a negative regulator of ABA signaling through direct dephosphorylation and destabilization of ABI5. Acts antagonistically with the protein kinase SRK2E/SNRK2.6 to regulate ABI5 phosphorylation and ABA responses. Involved in the regulation of phosphorylation status in hypocotyl phototropism. Involved in the negative regulation of photomorphogenesis by controlling the stability and transcriptional activity of PIF3 and PIF4 proteins in the dark, via the regulation of their phosphorylation status. The chain is Phytochrome-associated serine/threonine-protein phosphatase 1 from Arabidopsis thaliana (Mouse-ear cress).